Reading from the N-terminus, the 130-residue chain is Small ribosomal subunit protein uS9 (130 aa).

This sequence belongs to the universal ribosomal protein uS9 family.

The polypeptide is Small ribosomal subunit protein uS9 (Bacillus thuringiensis subsp. konkukian (strain 97-27)).